Consider the following 193-residue polypeptide: Chaperone protein TorD (193 aa).

Belongs to the TorD/DmsD family. TorD subfamily.

Its subcellular location is the cytoplasm. In terms of biological role, involved in the biogenesis of TorA. Acts on TorA before the insertion of the molybdenum cofactor and, as a result, probably favors a conformation of the apoenzyme that is competent for acquiring the cofactor. In Actinobacillus succinogenes (strain ATCC 55618 / DSM 22257 / CCUG 43843 / 130Z), this protein is Chaperone protein TorD.